The primary structure comprises 310 residues: tRNA dimethylallyltransferase (310 aa).

13–20 (GPTASGKT) is an ATP binding site. Residue 15 to 20 (TASGKT) coordinates substrate. 4 interaction with substrate tRNA regions span residues 38–41 (DSAL), 162–166 (QRLSR), 243–248 (RCVGYR), and 276–283 (KRQITWLR).

Belongs to the IPP transferase family. In terms of assembly, monomer. It depends on Mg(2+) as a cofactor.

It catalyses the reaction adenosine(37) in tRNA + dimethylallyl diphosphate = N(6)-dimethylallyladenosine(37) in tRNA + diphosphate. Catalyzes the transfer of a dimethylallyl group onto the adenine at position 37 in tRNAs that read codons beginning with uridine, leading to the formation of N6-(dimethylallyl)adenosine (i(6)A). The protein is tRNA dimethylallyltransferase of Aliivibrio fischeri (strain ATCC 700601 / ES114) (Vibrio fischeri).